The chain runs to 176 residues: Protein GrpE (176 aa).

Belongs to the GrpE family. As to quaternary structure, homodimer.

It localises to the cytoplasm. Its function is as follows. Participates actively in the response to hyperosmotic and heat shock by preventing the aggregation of stress-denatured proteins, in association with DnaK and GrpE. It is the nucleotide exchange factor for DnaK and may function as a thermosensor. Unfolded proteins bind initially to DnaJ; upon interaction with the DnaJ-bound protein, DnaK hydrolyzes its bound ATP, resulting in the formation of a stable complex. GrpE releases ADP from DnaK; ATP binding to DnaK triggers the release of the substrate protein, thus completing the reaction cycle. Several rounds of ATP-dependent interactions between DnaJ, DnaK and GrpE are required for fully efficient folding. This chain is Protein GrpE, found in Meiothermus ruber.